The primary structure comprises 261 residues: uncharacterized protein (261 aa).

The next 5 membrane-spanning stretches (helical) occupy residues phenylalanine 38–leucine 58, tyrosine 134–isoleucine 154, isoleucine 163–leucine 183, tyrosine 195–leucine 215, and histidine 219–valine 239.

It localises to the membrane. This is an uncharacterized protein from Dictyostelium discoideum (Social amoeba).